The following is a 391-amino-acid chain: Chorismate synthase (391 aa).

R48 is an NADP(+) binding site. Residues 126-128 (RAS), G286, 301-305 (KPTSS), and R328 contribute to the FMN site.

Belongs to the chorismate synthase family. FMNH2 is required as a cofactor.

The enzyme catalyses 5-O-(1-carboxyvinyl)-3-phosphoshikimate = chorismate + phosphate. It participates in metabolic intermediate biosynthesis; chorismate biosynthesis; chorismate from D-erythrose 4-phosphate and phosphoenolpyruvate: step 7/7. Catalyzes the anti-1,4-elimination of the C-3 phosphate and the C-6 proR hydrogen from 5-enolpyruvylshikimate-3-phosphate (EPSP) to yield chorismate, which is the branch point compound that serves as the starting substrate for the three terminal pathways of aromatic amino acid biosynthesis. This reaction introduces a second double bond into the aromatic ring system. This is Chorismate synthase from Saccharolobus islandicus (strain Y.N.15.51 / Yellowstone #2) (Sulfolobus islandicus).